The chain runs to 124 residues: Protein MT1307 (124 aa).

Residues 1–35 constitute a signal peptide (tat-type signal); it reads MTTMITLRRRFAVAVAGVATAAATTVTLAPAPANA.

To M.tuberculosis Rv1813c. Post-translationally, predicted to be exported by the Tat system. The position of the signal peptide cleavage has not been experimentally proven.

The protein is Protein MT1307 of Mycobacterium tuberculosis (strain CDC 1551 / Oshkosh).